The following is a 533-amino-acid chain: Phosphatidylinositol 4-kinase gamma 8 (533 aa).

Residues 101-397 (GAQPLLLPSG…AVSGSDDDDD (297 aa)) form the PI3K/PI4K catalytic domain. The tract at residues 107 to 113 (LPSGLGG) is G-loop. ATP contacts are provided by residues 108–114 (PSGLGGA), lysine 129, and 210–213 (QRFV). Positions 243-251 (LNLDRHAGN) are catalytic loop. An activation loop region spans residues 276-302 (PIDHGLCLPECLDDPYFEWLNWPQASV). Aspartate 278 provides a ligand contact to ATP.

This sequence belongs to the PI3/PI4-kinase family. Type II PI4K subfamily.

The catalysed reaction is a 1,2-diacyl-sn-glycero-3-phospho-(1D-myo-inositol) + ATP = a 1,2-diacyl-sn-glycero-3-phospho-(1D-myo-inositol 4-phosphate) + ADP + H(+). Functionally, the phosphorylation of phosphatidylinositol (PI) to PI4P is the first committed step in the generation of phosphatidylinositol 4,5-bisphosphate (PIP2), a precursor of the second messenger inositol 1,4,5-trisphosphate (InsP3). The chain is Phosphatidylinositol 4-kinase gamma 8 (PI4KG8) from Arabidopsis thaliana (Mouse-ear cress).